Here is a 943-residue protein sequence, read N- to C-terminus: Protein translocase subunit SecA (943 aa).

Residues Gln77, 95–99, and Asp484 contribute to the ATP site; that span reads GEGKT.

Belongs to the SecA family. In terms of assembly, monomer and homodimer. Part of the essential Sec protein translocation apparatus which comprises SecA, SecYEG and auxiliary proteins SecDF. Other proteins may also be involved.

The protein resides in the cell membrane. It localises to the cytoplasm. It carries out the reaction ATP + H2O + cellular proteinSide 1 = ADP + phosphate + cellular proteinSide 2.. Functionally, part of the Sec protein translocase complex. Interacts with the SecYEG preprotein conducting channel. Has a central role in coupling the hydrolysis of ATP to the transfer of proteins into and across the cell membrane, serving as an ATP-driven molecular motor driving the stepwise translocation of polypeptide chains across the membrane. The polypeptide is Protein translocase subunit SecA (Mesoplasma florum (strain ATCC 33453 / NBRC 100688 / NCTC 11704 / L1) (Acholeplasma florum)).